We begin with the raw amino-acid sequence, 967 residues long: Cytosolic carboxypeptidase 2 (967 aa).

The region spanning Tyr330–Cys601 is the Peptidase M14 domain. 3 residues coordinate Zn(2+): His396, Glu399, and His492. The Proton donor/acceptor role is filled by Glu565. Disordered stretches follow at residues Lys679–Ala706 and Pro944–Lys967. Residues Ile946–Lys967 show a composition bias toward polar residues.

It belongs to the peptidase M14 family. Zn(2+) serves as cofactor.

Its subcellular location is the cytoplasm. It localises to the cytosol. It is found in the cytoskeleton. The protein localises to the microtubule organizing center. The protein resides in the centrosome. Its subcellular location is the centriole. It localises to the cilium basal body. It carries out the reaction (L-glutamyl)(n+1)-gamma-L-glutamyl-L-glutamyl-[protein] + H2O = (L-glutamyl)(n)-gamma-L-glutamyl-L-glutamyl-[protein] + L-glutamate. Functionally, metallocarboxypeptidase that mediates deglutamylation of target proteins. Catalyzes the deglutamylation of polyglutamate side chains generated by post-translational polyglutamylation in proteins such as tubulins. Also removes gene-encoded polyglutamates from the carboxy-terminus of target proteins such as MYLK. Does not show detyrosinase or deglycylase activities from the carboxy-terminus of tubulin. In terms of biological role, metallocarboxypeptidase that mediates deglutamylation of tubulin and non-tubulin target proteins. Catalyzes the removal of polyglutamate side chains present on the gamma-carboxyl group of glutamate residues within the C-terminal tail of tubulin protein. Specifically cleaves tubulin long-side-chains, while it is not able to remove the branching point glutamate. Also catalyzes the removal of polyglutamate residues from the carboxy-terminus of non-tubulin proteins. In Xenopus tropicalis (Western clawed frog), this protein is Cytosolic carboxypeptidase 2 (agbl2).